Consider the following 191-residue polypeptide: 3-isopropylmalate dehydratase small subunit (191 aa).

It belongs to the LeuD family. LeuD type 1 subfamily. As to quaternary structure, heterodimer of LeuC and LeuD.

The enzyme catalyses (2R,3S)-3-isopropylmalate = (2S)-2-isopropylmalate. It functions in the pathway amino-acid biosynthesis; L-leucine biosynthesis; L-leucine from 3-methyl-2-oxobutanoate: step 2/4. Catalyzes the isomerization between 2-isopropylmalate and 3-isopropylmalate, via the formation of 2-isopropylmaleate. The chain is 3-isopropylmalate dehydratase small subunit from Staphylococcus saprophyticus subsp. saprophyticus (strain ATCC 15305 / DSM 20229 / NCIMB 8711 / NCTC 7292 / S-41).